Here is a 223-residue protein sequence, read N- to C-terminus: Phosphoribosylformylglycinamidine synthase subunit PurQ (223 aa).

Positions 3-223 constitute a Glutamine amidotransferase type-1 domain; the sequence is FAVLVFPGSN…MVNSWREQNV (221 aa). The active-site Nucleophile is Cys-85. Active-site residues include His-193 and Glu-195.

As to quaternary structure, part of the FGAM synthase complex composed of 1 PurL, 1 PurQ and 2 PurS subunits.

It is found in the cytoplasm. It catalyses the reaction N(2)-formyl-N(1)-(5-phospho-beta-D-ribosyl)glycinamide + L-glutamine + ATP + H2O = 2-formamido-N(1)-(5-O-phospho-beta-D-ribosyl)acetamidine + L-glutamate + ADP + phosphate + H(+). The enzyme catalyses L-glutamine + H2O = L-glutamate + NH4(+). Its pathway is purine metabolism; IMP biosynthesis via de novo pathway; 5-amino-1-(5-phospho-D-ribosyl)imidazole from N(2)-formyl-N(1)-(5-phospho-D-ribosyl)glycinamide: step 1/2. Functionally, part of the phosphoribosylformylglycinamidine synthase complex involved in the purines biosynthetic pathway. Catalyzes the ATP-dependent conversion of formylglycinamide ribonucleotide (FGAR) and glutamine to yield formylglycinamidine ribonucleotide (FGAM) and glutamate. The FGAM synthase complex is composed of three subunits. PurQ produces an ammonia molecule by converting glutamine to glutamate. PurL transfers the ammonia molecule to FGAR to form FGAM in an ATP-dependent manner. PurS interacts with PurQ and PurL and is thought to assist in the transfer of the ammonia molecule from PurQ to PurL. The polypeptide is Phosphoribosylformylglycinamidine synthase subunit PurQ (Staphylococcus haemolyticus (strain JCSC1435)).